Here is a 102-residue protein sequence, read N- to C-terminus: NADH-quinone oxidoreductase subunit K (102 aa).

The next 3 helical transmembrane spans lie at 2–22 (LDFY…GVIL), 26–46 (IFTI…IFAT), and 58–78 (VIVM…LALI).

It belongs to the complex I subunit 4L family. NDH-1 is composed of 14 different subunits. Subunits NuoA, H, J, K, L, M, N constitute the membrane sector of the complex.

The protein resides in the cell inner membrane. The catalysed reaction is a quinone + NADH + 5 H(+)(in) = a quinol + NAD(+) + 4 H(+)(out). Its function is as follows. NDH-1 shuttles electrons from NADH, via FMN and iron-sulfur (Fe-S) centers, to quinones in the respiratory chain. The immediate electron acceptor for the enzyme in this species is believed to be ubiquinone. Couples the redox reaction to proton translocation (for every two electrons transferred, four hydrogen ions are translocated across the cytoplasmic membrane), and thus conserves the redox energy in a proton gradient. The sequence is that of NADH-quinone oxidoreductase subunit K from Campylobacter fetus subsp. fetus (strain 82-40).